The chain runs to 172 residues: Small ribosomal subunit protein uS5 (172 aa).

The region spanning 13 to 76 (LIEKMVAVNR…DQARRSMIKV (64 aa)) is the S5 DRBM domain.

This sequence belongs to the universal ribosomal protein uS5 family. Part of the 30S ribosomal subunit. Contacts proteins S4 and S8.

Its function is as follows. With S4 and S12 plays an important role in translational accuracy. Located at the back of the 30S subunit body where it stabilizes the conformation of the head with respect to the body. The protein is Small ribosomal subunit protein uS5 of Neisseria gonorrhoeae (strain ATCC 700825 / FA 1090).